The chain runs to 55 residues: Locustin (55 aa).

Disulfide bonds link Cys-5/Cys-40, Cys-7/Cys-36, Cys-10/Cys-32, and Cys-17/Cys-54.

Monomer. In terms of tissue distribution, stored in hemocyte granules and secreted into the hemolymph.

It localises to the secreted. Has antibacterial activity against Gram-positive bacterium M.luteus. This Locusta migratoria (Migratory locust) protein is Locustin.